We begin with the raw amino-acid sequence, 196 residues long: Large ribosomal subunit protein uL18 (196 aa).

This sequence belongs to the universal ribosomal protein uL18 family. In terms of assembly, part of the 50S ribosomal subunit. Contacts the 5S and 23S rRNAs.

Its function is as follows. This is one of the proteins that bind and probably mediate the attachment of the 5S RNA into the large ribosomal subunit, where it forms part of the central protuberance. This chain is Large ribosomal subunit protein uL18, found in Saccharolobus islandicus (strain L.S.2.15 / Lassen #1) (Sulfolobus islandicus).